The primary structure comprises 287 residues: Glycine--tRNA ligase alpha subunit (287 aa).

Belongs to the class-II aminoacyl-tRNA synthetase family. In terms of assembly, tetramer of two alpha and two beta subunits.

It is found in the cytoplasm. It carries out the reaction tRNA(Gly) + glycine + ATP = glycyl-tRNA(Gly) + AMP + diphosphate. This is Glycine--tRNA ligase alpha subunit from Petrotoga mobilis (strain DSM 10674 / SJ95).